The sequence spans 322 residues: DNA primase small subunit PriS (322 aa).

Residues aspartate 100, aspartate 102, and aspartate 228 contribute to the active site.

The protein belongs to the eukaryotic-type primase small subunit family. In terms of assembly, heterodimer of a small subunit (PriS) and a large subunit (PriL). Mg(2+) serves as cofactor. It depends on Mn(2+) as a cofactor.

Its function is as follows. Catalytic subunit of DNA primase, an RNA polymerase that catalyzes the synthesis of short RNA molecules used as primers for DNA polymerase during DNA replication. The small subunit contains the primase catalytic core and has DNA synthesis activity on its own. Binding to the large subunit stabilizes and modulates the activity, increasing the rate of DNA synthesis while decreasing the length of the DNA fragments, and conferring RNA synthesis capability. The DNA polymerase activity may enable DNA primase to also catalyze primer extension after primer synthesis. May also play a role in DNA repair. The polypeptide is DNA primase small subunit PriS (Sulfolobus acidocaldarius (strain ATCC 33909 / DSM 639 / JCM 8929 / NBRC 15157 / NCIMB 11770)).